Consider the following 1106-residue polypeptide: Inversin (1106 aa).

ANK repeat units follow at residues 13 to 42, 47 to 76, 80 to 110, 113 to 144, 148 to 177, 181 to 213, 220 to 250, 254 to 285, 288 to 317, 321 to 350, 356 to 385, 389 to 418, 422 to 451, 455 to 484, 488 to 517, and 523 to 553; these read SLAS…ELKD, FGRT…DVNR, SRRT…WMQK, EGMT…EVDT, NKQT…NIGI, EGKI…TESL, EGRT…NVTS, LFRT…TIPS, QGAT…VKDD, EGRT…DIDI, YAGT…QVDA, MKHT…RVDL, DGHS…NPNV, AGRT…DPNI, EGRT…FPNH, and ERYT…SIAA. Positions 490–498 match the D-box 1 motif; it reads RTALHWLCN. One can recognise an IQ 1 domain in the interval 555 to 584; sequence QDIAAFKIQAVYKGYKVRKAFQERKNLLMK. Positions 589–607 are enriched in basic and acidic residues; sequence RKDAAAKKREEESKRKEAS. Disordered regions lie at residues 589–615, 636–688, 746–782, and 809–833; these read RKDA…MQNM, LQLS…ELQS, ANGT…GNRG, and AVPK…CSPA. 2 stretches are compositionally biased toward polar residues: residues 636-645 and 653-666; these read LQLSNKQTDL and VSAS…NSRG. A compositionally biased stretch (basic residues) spans 812-822; sequence KSKRHQQKSRH. Residues 944-952 carry the D-box 2 motif; the sequence is RKELFRKKN. The 30-residue stretch at 951-980 folds into the IQ 2 domain; it reads KNYAATVIQRTWRSYRLRQELSQLLSAKRQ.

Binds calmodulin via its IQ domains. Interacts with APC2.

It is found in the cytoplasm. The protein localises to the cytoskeleton. In terms of biological role, required for normal renal development and establishment of left-right axis. Probably acts as a molecular switch between different Wnt signaling pathways. Inhibits the canonical Wnt pathway by targeting cytoplasmic disheveled for degradation by the ubiquitin-proteasome. This suggests that it is required in renal development to oppose the repression of terminal differentiation of tubular epithelial cells by Wnt signaling. The protein is Inversin (INVS) of Gallus gallus (Chicken).